The following is a 294-amino-acid chain: tRNA-uridine aminocarboxypropyltransferase 1 (294 aa).

Positions aspartate 158–glycine 185 are disordered. A DXTW motif is present at residues aspartate 202–tryptophan 205.

The protein belongs to the TDD superfamily. DTWD1 family.

The protein localises to the nucleus. It carries out the reaction a uridine in tRNA + S-adenosyl-L-methionine = a 3-[(3S)-3-amino-3-carboxypropyl]uridine in tRNA + S-methyl-5'-thioadenosine + H(+). In terms of biological role, catalyzes the formation of 3-(3-amino-3-carboxypropyl)uridine (acp3U) at position 20 in the D-loop of several cytoplasmic tRNAs (acp3U(20)). In Xenopus tropicalis (Western clawed frog), this protein is tRNA-uridine aminocarboxypropyltransferase 1.